The primary structure comprises 184 residues: Casparian strip membrane protein 3 (184 aa).

Residues 1-22 (MEGSGEHGETSKGPLSKGVSRG) are Cytoplasmic-facing. The chain crosses the membrane as a helical span at residues 23-43 (LCILDLIFRVIAVIGTLASAI). The Extracellular segment spans residues 44-72 (AMGTTNQTMPFFTQFVQFKERYSDLPTLT). Asparagine 49 is a glycosylation site (N-linked (GlcNAc...) asparagine). Residues 73–93 (FFVVANSIASAYLIISLPLSI) traverse the membrane as a helical segment. Topologically, residues 94–105 (VHIIRSRAKYSR) are cytoplasmic. The helical transmembrane segment at 106–126 (LILIFFDVAMLALVTAAASAG) threads the bilayer. The Extracellular segment spans residues 127-159 (AAIVYLAHNGNVSANWFAICQQFDSFCERISGS). An N-linked (GlcNAc...) asparagine glycan is attached at asparagine 137. The chain crosses the membrane as a helical span at residues 160 to 180 (LIGSFAAMVVLILLILLSAVA). Topologically, residues 181-184 (LARR) are cytoplasmic.

Belongs to the Casparian strip membrane proteins (CASP) family. As to quaternary structure, homodimer and heterodimers.

The protein resides in the cell membrane. In terms of biological role, regulates membrane-cell wall junctions and localized cell wall deposition. Required for establishment of the Casparian strip membrane domain (CSD) and the subsequent formation of Casparian strips, a cell wall modification of the root endodermis that determines an apoplastic barrier between the intraorganismal apoplasm and the extraorganismal apoplasm and prevents lateral diffusion. This chain is Casparian strip membrane protein 3, found in Brachypodium distachyon (Purple false brome).